The following is a 70-amino-acid chain: Small ribosomal subunit protein bS21 (70 aa).

The protein belongs to the bacterial ribosomal protein bS21 family.

This is Small ribosomal subunit protein bS21 from Wolinella succinogenes (strain ATCC 29543 / DSM 1740 / CCUG 13145 / JCM 31913 / LMG 7466 / NCTC 11488 / FDC 602W) (Vibrio succinogenes).